A 675-amino-acid chain; its full sequence is Vacuolar protein sorting-associated protein 5 (675 aa).

Disordered regions lie at residues 1–26 (MDYE…QSLV), 65–84 (EWKD…EHDN), and 165–219 (RAQR…RREN). Residues 168-180 (RNSKRNHSLKAKR) show a composition bias toward basic residues. Positions 195–204 (PLKKAEKENE) are enriched in basic and acidic residues. A PX domain is found at 279–394 (VAFKVEVKDP…LFLTSDDFSS (116 aa)). Positions 320, 346, and 360 each coordinate a 1,2-diacyl-sn-glycero-3-phospho-(1D-myo-inositol-3-phosphate).

The protein belongs to the sorting nexin family. In terms of assembly, component of the retromer complex which consists of VPS29, VPS26, VPS35, VPS5 and VPS17. Component of a retromer subcomplex consisting of VPSD5 and VPS17. Post-translationally, phosphorylated on serine residue(s).

It localises to the cytoplasm. It is found in the golgi apparatus membrane. Its subcellular location is the endosome membrane. In terms of biological role, plays a role in vesicular protein sorting. Required for retention of late Golgi membrane proteins and vacuolar biogenesis. Component of the membrane-associated retromer complex which is essential in endosome-to-Golgi retrograde transport. The VPS5-VPS17 subcomplex may assemble onto the membrane to promote vesicle formation. The protein is Vacuolar protein sorting-associated protein 5 (VPS5) of Saccharomyces cerevisiae (strain ATCC 204508 / S288c) (Baker's yeast).